Reading from the N-terminus, the 24-residue chain is Probable caffeoyl-CoA O-methyltransferase (24 aa).

This sequence belongs to the class I-like SAM-binding methyltransferase superfamily. Cation-dependent O-methyltransferase family. CCoAMT subfamily. A divalent metal cation is required as a cofactor.

It carries out the reaction (E)-caffeoyl-CoA + S-adenosyl-L-methionine = (E)-feruloyl-CoA + S-adenosyl-L-homocysteine + H(+). The protein operates within aromatic compound metabolism; phenylpropanoid biosynthesis. In terms of biological role, methylates caffeoyl-CoA to feruloyl-CoA and 5-hydroxyferuloyl-CoA to sinapoyl-CoA. Plays a role in the synthesis of feruloylated polysaccharides. Involved in the reinforcement of the plant cell wall. Also involved in the responding to wounding or pathogen challenge by the increased formation of cell wall-bound ferulic acid polymers. The polypeptide is Probable caffeoyl-CoA O-methyltransferase (Pinus pinaster (Maritime pine)).